Here is a 419-residue protein sequence, read N- to C-terminus: Mitochondrial chaperone BCS1 (419 aa).

Residues 2–15 (PLSDFILALKDNPY) are Mitochondrial intermembrane-facing. Residues 16–32 (FGAGFGLVGVGTALALA) form a helical membrane-spanning segment. The Mitochondrial matrix segment spans residues 33 to 419 (RKGVQLGLVA…AIHNAESLRR (387 aa)). Residue tyrosine 181 is modified to Phosphotyrosine. 230–237 (GPPGCGKS) contributes to the ATP binding site.

It belongs to the AAA ATPase family. BCS1 subfamily. In terms of assembly, interacts with LETM1. Ubiquitous.

The protein resides in the mitochondrion inner membrane. The enzyme catalyses ATP + H2O = ADP + phosphate + H(+). Chaperone necessary for the incorporation of Rieske iron-sulfur protein UQCRFS1 into the mitochondrial respiratory chain complex III. Plays an important role in the maintenance of mitochondrial tubular networks, respiratory chain assembly and formation of the LETM1 complex. The protein is Mitochondrial chaperone BCS1 (BCS1L) of Homo sapiens (Human).